Reading from the N-terminus, the 116-residue chain is S-adenosylmethionine decarboxylase proenzyme (116 aa).

The active-site Schiff-base intermediate with substrate; via pyruvic acid is the serine 63. Serine 63 carries the post-translational modification Pyruvic acid (Ser); by autocatalysis. The active-site Proton acceptor; for processing activity is histidine 68. The active-site Proton donor; for catalytic activity is cysteine 83.

Belongs to the prokaryotic AdoMetDC family. Type 1 subfamily. In terms of assembly, heterotetramer of two alpha and two beta chains arranged as a dimer of alpha/beta heterodimers. Pyruvate is required as a cofactor. In terms of processing, is synthesized initially as an inactive proenzyme. Formation of the active enzyme involves a self-maturation process in which the active site pyruvoyl group is generated from an internal serine residue via an autocatalytic post-translational modification. Two non-identical subunits are generated from the proenzyme in this reaction, and the pyruvate is formed at the N-terminus of the alpha chain, which is derived from the carboxyl end of the proenzyme. The post-translation cleavage follows an unusual pathway, termed non-hydrolytic serinolysis, in which the side chain hydroxyl group of the serine supplies its oxygen atom to form the C-terminus of the beta chain, while the remainder of the serine residue undergoes an oxidative deamination to produce ammonia and the pyruvoyl group blocking the N-terminus of the alpha chain.

It carries out the reaction S-adenosyl-L-methionine + H(+) = S-adenosyl 3-(methylsulfanyl)propylamine + CO2. Its pathway is amine and polyamine biosynthesis; S-adenosylmethioninamine biosynthesis; S-adenosylmethioninamine from S-adenosyl-L-methionine: step 1/1. Its function is as follows. Catalyzes the decarboxylation of S-adenosylmethionine to S-adenosylmethioninamine (dcAdoMet), the propylamine donor required for the synthesis of the polyamines spermine and spermidine from the diamine putrescine. In Clostridium botulinum (strain ATCC 19397 / Type A), this protein is S-adenosylmethionine decarboxylase proenzyme.